Here is an 822-residue protein sequence, read N- to C-terminus: MTQMASAGGDTSADNVGAHGGRTVAPVPYELTEAAGPLDRAELAALDAWWRAANYLSVGQIYLMANPLLTEPLRPEHIKPRLLGHFGTVPGLNLVWTHANRVIRQRGLDAVFVAGPGHGGPGPNACAWLEGTYSELYSHIPRDGEGMAALFAQFSFPGGVPSHCAPETPGSFHEGGELGYSLLHAYGAALDNPDLTVFCVIGDGEAETGPLATSWHGNKFLNPGRDGAVLPILALNEYKIANPTLFARIPEPELINLLEGYGHEPIVVAGDDPGVVHQRLAAAMDTCMNRIAQIQRAARDGADGSRPAWPMIVLRTPKGWTCPPVVDGDRVEGTFRAHQVPLPAARTDDGHRAVLEQWLRSYRPEELFDDRGRPVPELLALAPEGDRRMSANPVANGGALVRDLRLPDWREFGVEVKTPGGSTHEATRVLGGWLREVTRLNPHNFLTFAPDELASNRLQDILEVTGRDWQAEVGEYDVALDRSGRVIEVLSEHICQGLLEGYLLTGRHGVFTCYEAFIHIVDAMFNQHAKWLDASAAVPWRRPLASLNYLLSSHVWRQDHNGFTHQDPGFLDVVLNKKPEIVRVYLPPDANTLLSTYDHCLRSRHYVNVVVAGKQPQEDWLSVEQAAVHCARGLGIWEWACHNDDPGTTPDVVLACAGDVPTLETLAAAAILRDRLPRLRVRVINVVDLMRLLPAEEHPHGLPDREFDTLFTTASPIIFAFHGYPWLIHRLTYRRTNHDGLHVRGYKEEGTTTTPFDMVMLNDLDRYHLVMDVIDRVPGLRETAAGLRQEMVDARWRARAWTREHGADIPVVADWTWPEPSR.

This sequence belongs to the XFP family. Thiamine diphosphate is required as a cofactor.

This is Probable phosphoketolase from Nocardia farcinica (strain IFM 10152).